The following is a 324-amino-acid chain: Glyoxylate/hydroxypyruvate reductase B (324 aa).

Active-site residues include Arg-237 and Glu-266. His-285 functions as the Proton donor in the catalytic mechanism.

The protein belongs to the D-isomer specific 2-hydroxyacid dehydrogenase family. GhrB subfamily. As to quaternary structure, homodimer.

It is found in the cytoplasm. It carries out the reaction glycolate + NADP(+) = glyoxylate + NADPH + H(+). The catalysed reaction is (R)-glycerate + NAD(+) = 3-hydroxypyruvate + NADH + H(+). It catalyses the reaction (R)-glycerate + NADP(+) = 3-hydroxypyruvate + NADPH + H(+). Functionally, catalyzes the NADPH-dependent reduction of glyoxylate and hydroxypyruvate into glycolate and glycerate, respectively. The protein is Glyoxylate/hydroxypyruvate reductase B of Shigella boydii serotype 4 (strain Sb227).